The chain runs to 392 residues: MALMTVRDIDVKGKRVFVRVDFNVPLEDGRITDDTRIRAAVPTIRYLVEEGAVAVLASHLGRPKGQRNEKYSLAPCARRLSELLGREVVFAPDCIGEEVERLVAEQPPGSVVLLENVRFYAEEEKNDPEFAAKLARLGEIFVNDAFGTAHRAHASTRGVADHMPVRVAGFLMQKEVDIMGKALSDPDRPFVAIIGGAKVSDKIMVIENLLTKVDRLIIGGGMANTFLRARGFATGKSLVEEDRVDTARELLAKGGDKILLPTDLVVASEFKADAEQKVVPVDAIPEGWMALDIGPETARAFADVIRGAHTVVWNGPMGVFEMEPFARGTFAVAQAMADCEGVTIVGGGDSVAAVEAAGLADRMTHVSTGGGASLEFLEGKELPGVACLAVKP.

Substrate is bound by residues 21–23, R36, 59–62, R118, and R151; these read DFN and HLGR. ATP contacts are provided by residues K202, E321, and 347-350; that span reads GGDS.

It belongs to the phosphoglycerate kinase family. Monomer.

The protein localises to the cytoplasm. The enzyme catalyses (2R)-3-phosphoglycerate + ATP = (2R)-3-phospho-glyceroyl phosphate + ADP. It functions in the pathway carbohydrate degradation; glycolysis; pyruvate from D-glyceraldehyde 3-phosphate: step 2/5. The chain is Phosphoglycerate kinase from Symbiobacterium thermophilum (strain DSM 24528 / JCM 14929 / IAM 14863 / T).